A 429-amino-acid chain; its full sequence is uncharacterized protein (429 aa).

Residues S116, D179, and H206 each act as charge relay system in the active site.

This sequence belongs to the AB hydrolase 3 family.

Its subcellular location is the cytoplasm. The protein resides in the nucleus. This is an uncharacterized protein from Schizosaccharomyces pombe (strain 972 / ATCC 24843) (Fission yeast).